Reading from the N-terminus, the 494-residue chain is Glutamyl-tRNA(Gln) amidotransferase subunit A (494 aa).

Residues K79 and S159 each act as charge relay system in the active site. S183 acts as the Acyl-ester intermediate in catalysis.

The protein belongs to the amidase family. GatA subfamily. Heterotrimer of A, B and C subunits.

The catalysed reaction is L-glutamyl-tRNA(Gln) + L-glutamine + ATP + H2O = L-glutaminyl-tRNA(Gln) + L-glutamate + ADP + phosphate + H(+). Its function is as follows. Allows the formation of correctly charged Gln-tRNA(Gln) through the transamidation of misacylated Glu-tRNA(Gln) in organisms which lack glutaminyl-tRNA synthetase. The reaction takes place in the presence of glutamine and ATP through an activated gamma-phospho-Glu-tRNA(Gln). This is Glutamyl-tRNA(Gln) amidotransferase subunit A from Bartonella bacilliformis (strain ATCC 35685 / KC583 / Herrer 020/F12,63).